Reading from the N-terminus, the 316-residue chain is Ribosomal RNA small subunit methyltransferase H (316 aa).

S-adenosyl-L-methionine-binding positions include 35-37 (SGH), aspartate 55, phenylalanine 84, aspartate 105, and glutamine 112.

Belongs to the methyltransferase superfamily. RsmH family.

It is found in the cytoplasm. The enzyme catalyses cytidine(1402) in 16S rRNA + S-adenosyl-L-methionine = N(4)-methylcytidine(1402) in 16S rRNA + S-adenosyl-L-homocysteine + H(+). In terms of biological role, specifically methylates the N4 position of cytidine in position 1402 (C1402) of 16S rRNA. This Streptococcus equi subsp. equi (strain 4047) protein is Ribosomal RNA small subunit methyltransferase H.